The following is a 511-amino-acid chain: Glucans biosynthesis protein G (511 aa).

Residues 1–22 (MMKMRWLSAAVMLTLYTSSSWA) form the signal peptide.

The protein belongs to the OpgD/OpgG family.

The protein localises to the periplasm. Its pathway is glycan metabolism; osmoregulated periplasmic glucan (OPG) biosynthesis. Functionally, involved in the biosynthesis of osmoregulated periplasmic glucans (OPGs). The polypeptide is Glucans biosynthesis protein G (Escherichia coli O8 (strain IAI1)).